Here is a 325-residue protein sequence, read N- to C-terminus: Hexaprenyl-diphosphate synthase large subunit ((2E,6E)-farnesyl-diphosphate specific) (325 aa).

Residues K45, R48, and H77 each contribute to the isopentenyl diphosphate site. Residues D84, D88, and R93 each contribute to the all-trans-hexaprenyl diphosphate site. 2 residues coordinate Mg(2+): D84 and D88. Isopentenyl diphosphate is bound at residue R94. All-trans-hexaprenyl diphosphate is bound by residues K170, T171, and Q208.

It belongs to the FPP/GGPP synthase family. In terms of assembly, dimer of heterodimer or heterotetramer composed of a small (Hexs-a) and large (Hexs-B) subunit. Mg(2+) serves as cofactor.

The catalysed reaction is 3 isopentenyl diphosphate + (2E,6E)-farnesyl diphosphate = all-trans-hexaprenyl diphosphate + 3 diphosphate. In terms of biological role, catalyzes the condensation of three molecules of isopentenyl diphosphate with farnesyl diphosphate (FPP) to yield (all-E)-hexaprenyl diphosphate (HexPP; C30), the precursor of the prenyl side chain of menaquinone-6. Large subunit Hexs-B catalyzes the condensation reaction and the final product chain length is cooperatively regulated by both the Hexs-A and Hexs-B subunits using the whole size of the hydrophobic cleft as a ruler. This chain is Hexaprenyl-diphosphate synthase large subunit ((2E,6E)-farnesyl-diphosphate specific) (hexs-b), found in Micrococcus luteus (Micrococcus lysodeikticus).